Consider the following 269-residue polypeptide: MFNNKMILIAGPCVIEGEDITLEIAGKLQSILAPYSDRIQWFFKSSYDKANRSSLNSFRGPGLTEGLRILAKVKETFGVGILTDVHTPQDAYAAAEVCNILQVPAFLCRQTDLLVATAETGAIVNLKKGQFLSPWDMEGPINKVLSTGNNKILLTERGCSFGYNNLVSDMRSIPVLSRSGFPVIFDATHSVQLPGALSTESGGLTEFVPTLSRAALAAGAHGLFIETHTNPKIAKSDAASMLSLEEFAALLPTWDQLFTCVSSFDMVSA.

Belongs to the KdsA family.

The protein localises to the cytoplasm. The enzyme catalyses D-arabinose 5-phosphate + phosphoenolpyruvate + H2O = 3-deoxy-alpha-D-manno-2-octulosonate-8-phosphate + phosphate. The protein operates within carbohydrate biosynthesis; 3-deoxy-D-manno-octulosonate biosynthesis; 3-deoxy-D-manno-octulosonate from D-ribulose 5-phosphate: step 2/3. Its pathway is bacterial outer membrane biogenesis; lipopolysaccharide biosynthesis. This is 2-dehydro-3-deoxyphosphooctonate aldolase (kdsA) from Chlamydia pneumoniae (Chlamydophila pneumoniae).